We begin with the raw amino-acid sequence, 540 residues long: 2-isopropylmalate synthase (540 aa).

The Pyruvate carboxyltransferase domain maps to 8–273; that stretch reads VLIFDTTLRD…FFGRDEDSPT (266 aa). Positions 17, 208, 210, and 244 each coordinate Mn(2+). The segment at 408 to 540 is regulatory domain; the sequence is QLKLVQVSCG…MAQLDSSPVH (133 aa).

This sequence belongs to the alpha-IPM synthase/homocitrate synthase family. LeuA type 1 subfamily. Homodimer. The cofactor is Mn(2+).

It localises to the cytoplasm. The enzyme catalyses 3-methyl-2-oxobutanoate + acetyl-CoA + H2O = (2S)-2-isopropylmalate + CoA + H(+). It functions in the pathway amino-acid biosynthesis; L-leucine biosynthesis; L-leucine from 3-methyl-2-oxobutanoate: step 1/4. In terms of biological role, catalyzes the condensation of the acetyl group of acetyl-CoA with 3-methyl-2-oxobutanoate (2-ketoisovalerate) to form 3-carboxy-3-hydroxy-4-methylpentanoate (2-isopropylmalate). This is 2-isopropylmalate synthase from Synechococcus sp. (strain CC9311).